A 220-amino-acid chain; its full sequence is Uracil-DNA glycosylase (220 aa).

D65 (proton acceptor) is an active-site residue.

Belongs to the uracil-DNA glycosylase (UDG) superfamily. UNG family.

It localises to the cytoplasm. It carries out the reaction Hydrolyzes single-stranded DNA or mismatched double-stranded DNA and polynucleotides, releasing free uracil.. Its function is as follows. Excises uracil residues from the DNA which can arise as a result of misincorporation of dUMP residues by DNA polymerase or due to deamination of cytosine. The protein is Uracil-DNA glycosylase of Amoebophilus asiaticus (strain 5a2).